A 1096-amino-acid polypeptide reads, in one-letter code: Constitutive coactivator of PPAR-gamma-like protein 2 (1096 aa).

The span at 35 to 59 shows a compositional bias: low complexity; the sequence is QQQHLHRQLPPTAALAPGAPRAARG. 3 disordered regions span residues 35-113, 508-579, and 971-1096; these read QQQH…PPQL, NYLP…DGEP, and SRSS…RKED. R58 carries the post-translational modification Omega-N-methylarginine. Basic residues predominate over residues 82–95; sequence TRHHHPAHHFHHHG. Positions 101-113 are enriched in pro residues; that stretch reads LHPPLPPPPPPQL. Over residues 540–559 the composition is skewed to basic and acidic residues; it reads HITEAFHHQPEWGNPNRDRG. The residue at position 977 (R977) is an Omega-N-methylarginine. Basic and acidic residues-rich tracts occupy residues 1041-1050 and 1076-1096; these read IKEEKSDHRL and NREK…RKED. A Glycyl lysine isopeptide (Lys-Gly) (interchain with G-Cter in SUMO2) cross-link involves residue K1042.

Belongs to the constitutive coactivator of PPAR-gamma family. In terms of tissue distribution, expressed at low levels in a number of tissues.

This Homo sapiens (Human) protein is Constitutive coactivator of PPAR-gamma-like protein 2 (FAM120C).